The chain runs to 132 residues: EF-hand calcium-binding domain-containing protein 10 (132 aa).

EF-hand domains lie at methionine 64 to cysteine 99 and glutamate 120 to phenylalanine 132.

This chain is EF-hand calcium-binding domain-containing protein 10 (Efcab10), found in Mus musculus (Mouse).